The primary structure comprises 526 residues: Maturase K (526 aa).

Belongs to the intron maturase 2 family. MatK subfamily.

It is found in the plastid. It localises to the chloroplast. Usually encoded in the trnK tRNA gene intron. Probably assists in splicing its own and other chloroplast group II introns. This Iris setosa (Hiougi-ayame) protein is Maturase K.